Reading from the N-terminus, the 757-residue chain is 5-methyltetrahydropteroyltriglutamate--homocysteine methyltransferase (757 aa).

5-methyltetrahydropteroyltri-L-glutamate contacts are provided by residues arginine 16–lysine 19 and lysine 112. Residues isoleucine 432–serine 434 and glutamate 485 contribute to the L-homocysteine site. L-methionine-binding positions include isoleucine 432 to serine 434 and glutamate 485. 5-methyltetrahydropteroyltri-L-glutamate-binding positions include arginine 516–cysteine 517 and tryptophan 562. Aspartate 600 serves as a coordination point for L-homocysteine. Aspartate 600 contributes to the L-methionine binding site. Residue glutamate 606 coordinates 5-methyltetrahydropteroyltri-L-glutamate. 3 residues coordinate Zn(2+): histidine 642, cysteine 644, and glutamate 666. Residue histidine 695 is the Proton donor of the active site. Position 727 (cysteine 727) interacts with Zn(2+).

Belongs to the vitamin-B12 independent methionine synthase family. The cofactor is Zn(2+).

The enzyme catalyses 5-methyltetrahydropteroyltri-L-glutamate + L-homocysteine = tetrahydropteroyltri-L-glutamate + L-methionine. It participates in amino-acid biosynthesis; L-methionine biosynthesis via de novo pathway; L-methionine from L-homocysteine (MetE route): step 1/1. Catalyzes the transfer of a methyl group from 5-methyltetrahydrofolate to homocysteine resulting in methionine formation. This is 5-methyltetrahydropteroyltriglutamate--homocysteine methyltransferase from Actinobacillus pleuropneumoniae serotype 7 (strain AP76).